We begin with the raw amino-acid sequence, 423 residues long: UDP-N-acetylglucosamine 1-carboxyvinyltransferase (423 aa).

22–23 (KN) contributes to the phosphoenolpyruvate binding site. Arg-98 contacts UDP-N-acetyl-alpha-D-glucosamine. The active-site Proton donor is Cys-122. Cys-122 carries the post-translational modification 2-(S-cysteinyl)pyruvic acid O-phosphothioketal. UDP-N-acetyl-alpha-D-glucosamine-binding positions include 127-131 (RPVDQ), Asp-311, and Ile-333.

It belongs to the EPSP synthase family. MurA subfamily.

The protein resides in the cytoplasm. The enzyme catalyses phosphoenolpyruvate + UDP-N-acetyl-alpha-D-glucosamine = UDP-N-acetyl-3-O-(1-carboxyvinyl)-alpha-D-glucosamine + phosphate. Its pathway is cell wall biogenesis; peptidoglycan biosynthesis. In terms of biological role, cell wall formation. Adds enolpyruvyl to UDP-N-acetylglucosamine. This is UDP-N-acetylglucosamine 1-carboxyvinyltransferase from Stenotrophomonas maltophilia (strain K279a).